Consider the following 847-residue polypeptide: Beta-hexosaminidase (847 aa).

Disulfide bonds link Cys31–Cys40, Cys377–Cys385, and Cys484–Cys530. The active-site Proton donor is Glu519.

Belongs to the glycosyl hydrolase 20 family.

It catalyses the reaction Hydrolysis of terminal non-reducing N-acetyl-D-hexosamine residues in N-acetyl-beta-D-hexosaminides.. It participates in glycan degradation; chitin degradation. Hydrolysis of terminal, non-reducing N-acetyl-beta-D-glucosamine residues in chitobiose and higher analogs, and in glycoproteins. This Vibrio vulnificus protein is Beta-hexosaminidase (hex).